The chain runs to 27 residues: Caerulein precursor fragment R4 (27 aa).

Expressed by the skin glands.

Its subcellular location is the secreted. Antimicrobial peptide. This chain is Caerulein precursor fragment R4, found in Xenopus ruwenzoriensis (Uganda clawed frog).